A 456-amino-acid polypeptide reads, in one-letter code: Divalent metal cation transporter MntH (456 aa).

The next 11 membrane-spanning stretches (helical) occupy residues 47–67, 77–97, 123–143, 151–171, 184–204, 227–247, 276–296, 316–336, 369–389, 392–412, and 422–442; these read ALSFFGPGYLVAVGYMDPGNW, FGYALLSVVLLSNLMAVLLQA, AWPLWLLAELAICATDLAEVI, LLFGIPLEIGVILTAVDVLLV, ALIITLLGVIALCFLTQIIMA, MLYIALGIIGATVMPHNLYLH, IALTFALVINASILILAAASF, PLLGSAIAPALFAIALLCCGL, FVAIVPAAIVTILYGSQGTTE, ILSQVVLSLQLPFAVIPLVIF, and LAAAPWVTFLAAITAAIIVVL.

This sequence belongs to the NRAMP family.

It is found in the cell inner membrane. H(+)-stimulated, divalent metal cation uptake system. This Brucella suis biovar 1 (strain 1330) protein is Divalent metal cation transporter MntH.